The primary structure comprises 881 residues: Serine/threonine-protein kinase/endoribonuclease IRE1b (881 aa).

A signal peptide spans 1–21 (MRGSALLDLILFLLVSPLAHS). The Lumenal segment spans residues 22-357 (FKGSEISKFY…KQAGFASKFS (336 aa)). N-linked (GlcNAc...) asparagine glycosylation is present at Asn115. A helical membrane pass occupies residues 358 to 378 (GLIVLIFGFCVTMLSVCGLFF). The Cytoplasmic segment spans residues 379–881 (YRLRQSIRIK…FFKYSKTTVF (503 aa)). The 286-residue stretch at 459 to 744 (FVSNKEIAKG…AQDVMHHPLF (286 aa)) folds into the Protein kinase domain. Residues 465 to 473 (IAKGSNGTV) and Lys487 contribute to the ATP site. The ATP selon article stretch occupies residues 481–502 (GRLVAVKRLVQSHHDVAQKEIL). The Proton acceptor role is filled by Asp608. Residues 642-661 (LTRNSTGLGSGSSGWQAPEQ) form a disordered region. Residues 747 to 878 (SDMRLSFLRD…EEFFFKYSKT (132 aa)) form the KEN domain.

The protein belongs to the protein kinase superfamily. Ser/Thr protein kinase family. In terms of assembly, homodimer; disulfide-linked. Dimer formation is driven by hydrophobic interactions within the N-terminal luminal domains and stabilized by disulfide bridges. Mg(2+) serves as cofactor. Autophosphorylated. In terms of tissue distribution, ubiquitous. Detected in the apical meristem, at leaf margins where vascular bundles end, in the anthers before pollen is formed and in the ovules at a very early stage of development. There is no expression in more mature embryos. Also strongly expressed in the cotyledons immediately after germination but not later on.

The protein resides in the endoplasmic reticulum membrane. It catalyses the reaction L-seryl-[protein] + ATP = O-phospho-L-seryl-[protein] + ADP + H(+). The catalysed reaction is L-threonyl-[protein] + ATP = O-phospho-L-threonyl-[protein] + ADP + H(+). Its activity is regulated as follows. The kinase domain is activated by trans-autophosphorylation. Kinase activity is required for activation of the endoribonuclease domain. Its function is as follows. Senses unfolded proteins in the lumen of the endoplasmic reticulum via its N-terminal domain which leads to enzyme auto-activation. The active endoribonuclease domain splices bZIP60 mRNA to generate a new C-terminus, converting it into a potent unfolded-protein response transcriptional activator which then induces transcription of UPR target genes. Involved in organ growth regulation. Plays a role in plant immunity and abiotic stress responses. Required for ER stress-induced autophagy. This chain is Serine/threonine-protein kinase/endoribonuclease IRE1b (IRE1B), found in Arabidopsis thaliana (Mouse-ear cress).